We begin with the raw amino-acid sequence, 189 residues long: Adenylate kinase (189 aa).

Residue 11 to 16 coordinates ATP; sequence GSGKGT. Residues 31 to 60 form an NMP region; it reads STGDVLRAEIKKGTELGKTAKGYIDQGQLL. Residues T32, R37, 58–60, 86–89, and Q93 each bind AMP; these read QLL and GFPR. An LID region spans residues 127 to 137; that stretch reads KRGQESGRADD. Residue R128 coordinates ATP. R134 and R145 together coordinate AMP. G173 serves as a coordination point for ATP.

This sequence belongs to the adenylate kinase family. In terms of assembly, monomer.

The protein resides in the cytoplasm. The enzyme catalyses AMP + ATP = 2 ADP. It functions in the pathway purine metabolism; AMP biosynthesis via salvage pathway; AMP from ADP: step 1/1. Its function is as follows. Catalyzes the reversible transfer of the terminal phosphate group between ATP and AMP. Plays an important role in cellular energy homeostasis and in adenine nucleotide metabolism. The protein is Adenylate kinase of Phocaeicola vulgatus (strain ATCC 8482 / DSM 1447 / JCM 5826 / CCUG 4940 / NBRC 14291 / NCTC 11154) (Bacteroides vulgatus).